Reading from the N-terminus, the 962-residue chain is Glycine dehydrogenase (decarboxylating) (962 aa).

Residue Lys-709 is modified to N6-(pyridoxal phosphate)lysine.

The protein belongs to the GcvP family. The glycine cleavage system is composed of four proteins: P, T, L and H. It depends on pyridoxal 5'-phosphate as a cofactor.

The enzyme catalyses N(6)-[(R)-lipoyl]-L-lysyl-[glycine-cleavage complex H protein] + glycine + H(+) = N(6)-[(R)-S(8)-aminomethyldihydrolipoyl]-L-lysyl-[glycine-cleavage complex H protein] + CO2. Functionally, the glycine cleavage system catalyzes the degradation of glycine. The P protein binds the alpha-amino group of glycine through its pyridoxal phosphate cofactor; CO(2) is released and the remaining methylamine moiety is then transferred to the lipoamide cofactor of the H protein. The protein is Glycine dehydrogenase (decarboxylating) of Shewanella baltica (strain OS195).